Consider the following 268-residue polypeptide: Nickel import ATP-binding protein NikE (268 aa).

In terms of domain architecture, ABC transporter spans 4–252; that stretch reads LNVSGLSHHY…SSDAGRVLQN (249 aa). 45 to 52 provides a ligand contact to ATP; sequence GRSGCGKS.

It belongs to the ABC transporter superfamily. Nickel importer (TC 3.A.1.5.3) family. In terms of assembly, the complex is composed of two ATP-binding proteins (NikD and NikE), two transmembrane proteins (NikB and NikC) and a solute-binding protein (NikA).

Its subcellular location is the cell inner membrane. It catalyses the reaction Ni(2+)(out) + ATP + H2O = Ni(2+)(in) + ADP + phosphate + H(+). Functionally, part of the ABC transporter complex NikABCDE involved in nickel import. Responsible for energy coupling to the transport system. The protein is Nickel import ATP-binding protein NikE of Shigella boydii serotype 4 (strain Sb227).